We begin with the raw amino-acid sequence, 1180 residues long: Nonsense-mediated mRNA decay factor SMG7 (1180 aa).

TPR repeat units lie at residues 151 to 184 (QHCL…VPSN) and 186 to 218 (QPYN…KFPF). Disordered stretches follow at residues 496 to 636 (PQEK…TQTT), 692 to 795 (QTAS…SYMQ), 893 to 913 (CSDQ…SSPL), 1019 to 1127 (SLFE…WAAQ), and 1148 to 1180 (SSMM…NPPH). The span at 504 to 520 (LQESSNGEQTPNESTHG) shows a compositional bias: polar residues. Composition is skewed to basic and acidic residues over residues 547 to 559 (ENIK…REQN), 584 to 606 (NEQK…KTTD), and 615 to 627 (TELR…EARK). Residues 692-718 (QTASHPQSANPVQTGKPSHIPYSQQRP) are compositionally biased toward polar residues. A compositionally biased stretch (pro residues) spans 728 to 740 (PPQPQQTQPPPPQ). The span at 741–778 (TSQQALQQSVQLQLQQQQQQQQQQQQQQQQSPTKQSSQ) shows a compositional bias: low complexity. A compositionally biased stretch (polar residues) spans 1026-1038 (WSPSLPASSDHST). Residues 1039–1065 (PASQSPHSSNPSSLPSSPPTHSHGSMP) are compositionally biased toward low complexity. Positions 1076-1090 (DSRDRRANDRWKAEK) are enriched in basic and acidic residues. Positions 1103-1125 (SASTSSVPETNSWHQGAPTSTWA) are enriched in polar residues.

The protein resides in the cytoplasm. The protein localises to the nucleus. Its function is as follows. Plays a role in nonsense-mediated mRNA decay. Recruits UPF1 to cytoplasmic mRNA decay bodies. Together with SMG5 is thought to provide a link to the mRNA degradation machinery involving exonucleolytic pathways, and to serve as an adapter for UPF1 to protein phosphatase 2A (PP2A), thereby triggering UPF1 dephosphorylation. Required for normal embryonic development. The chain is Nonsense-mediated mRNA decay factor SMG7 from Danio rerio (Zebrafish).